The sequence spans 438 residues: Fibrous sheath-interacting protein 1 (438 aa).

The disordered stretch occupies residues Met-1 to Glu-111. Over residues Ser-18–Ser-32 the composition is skewed to low complexity. The span at Ser-53–Asp-72 shows a compositional bias: basic and acidic residues. 3 positions are modified to phosphoserine: Ser-71, Ser-88, and Ser-89. A coiled-coil region spans residues Leu-131 to Lys-157. The segment at Ser-354 to Glu-390 is disordered. Basic and acidic residues-rich tracts occupy residues Gly-359–Thr-371 and Lys-378–Glu-390.

Belongs to the FSIP1 family.

This Rattus norvegicus (Rat) protein is Fibrous sheath-interacting protein 1 (Fsip1).